We begin with the raw amino-acid sequence, 126 residues long: UPF0212 protein TON_0350 (126 aa).

This sequence belongs to the UPF0212 family.

In Thermococcus onnurineus (strain NA1), this protein is UPF0212 protein TON_0350.